The chain runs to 323 residues: MPGFNYGGDQDEVYTPYRRVLVTGATGLLGRAVYKEFKNNDWDALGCGYNRARPFFLKCNLLDEDAVRGVIQSFQPHVIVHCAAERRPDVVERHTEAAMNLNVHACATLAKEAGGSFLIYISTDYVFDGRNPPYGENDAPNPLNLYGKSKLEGEREILRHCPGAAVLRVPILFGEVEKVEESAVTVLFERVQEGAESCTIDHCQQRFPTYTNDVARVCRNMAERALQDQSLRGIFHYSAKEQMTKYEMTCAIADAFNLPSSHLIPMTEQPAGAGAQRPQNAQLECSRLELLGLSVESTPFKNAIRDSLWPFQHDKRWRQTVFH.

Residues Thr-26–Leu-29, Tyr-49–Arg-51, Asn-60–Leu-61, Cys-82, Arg-86, Tyr-146, and Leu-172 contribute to the NADP(+) site. Residues Leu-308 to His-323 are required for interaction with MAT2A.

Belongs to the dTDP-4-dehydrorhamnose reductase family. MAT2B subfamily. Heterotrimer; composed of a catalytic mat2a homodimer that binds one regulatory mat2b chain. Heterohexamer; composed of a central, catalytic mat2a homotetramer flanked on either side by a regulatory mat2b chain. NADP binding increases the affinity for mat2a.

It participates in amino-acid biosynthesis; S-adenosyl-L-methionine biosynthesis; S-adenosyl-L-methionine from L-methionine: step 1/1. Its function is as follows. Regulatory subunit of S-adenosylmethionine synthetase 2, an enzyme that catalyzes the formation of S-adenosylmethionine from methionine and ATP. Regulates MAT2A catalytic activity by changing its kinetic properties, increasing its affinity for L-methionine. Can bind NADP (in vitro). The sequence is that of Methionine adenosyltransferase 2 subunit beta (mat2b) from Danio rerio (Zebrafish).